The following is a 393-amino-acid chain: Na(+)/H(+) antiporter NhaA 2 (393 aa).

11 consecutive transmembrane segments (helical) span residues 18–38 (SGGL…NSQL), 53–73 (LSVQ…MVGL), 91–111 (ILPG…YLAF), 120–140 (GWAI…SLLG), 149–169 (VFLA…IGLF), 172–192 (TGVS…LVAL), 208–228 (LVLW…GVLL), 263–283 (FIIV…GLGM), 294–314 (VAAG…LLLV), 332–352 (GTTL…LLAF), and 363–383 (IGIL…LRFS).

This sequence belongs to the NhaA Na(+)/H(+) (TC 2.A.33) antiporter family.

The protein resides in the cell inner membrane. It carries out the reaction Na(+)(in) + 2 H(+)(out) = Na(+)(out) + 2 H(+)(in). Its function is as follows. Na(+)/H(+) antiporter that extrudes sodium in exchange for external protons. The polypeptide is Na(+)/H(+) antiporter NhaA 2 (Brucella anthropi (strain ATCC 49188 / DSM 6882 / CCUG 24695 / JCM 21032 / LMG 3331 / NBRC 15819 / NCTC 12168 / Alc 37) (Ochrobactrum anthropi)).